The following is a 621-amino-acid chain: Laccase-2 (621 aa).

The first 23 residues, 1-23 (MMKSFFSAAALLLGLVAPSAVLA), serve as a signal peptide directing secretion. Positions 24-48 (APSLPGVPREVTRDLLRPVEERQSS) are excised as a propeptide. Cysteine 49 and cysteine 57 form a disulfide bridge. 2 Plastocyanin-like domains span residues 78–201 (TRTY…IVVN) and 210–367 (IDLG…LPTN). The N-linked (GlcNAc...) asparagine glycan is linked to asparagine 133. Cu cation-binding residues include histidine 138, histidine 140, histidine 183, and histidine 185. Intrachain disulfides connect cysteine 159/cysteine 586 and cysteine 343/cysteine 377. Residues asparagine 261, asparagine 276, asparagine 289, asparagine 325, and asparagine 334 are each glycosylated (N-linked (GlcNAc...) asparagine). Residues asparagine 401, asparagine 421, and asparagine 441 are each glycosylated (N-linked (GlcNAc...) asparagine). One can recognise a Plastocyanin-like 3 domain in the interval 430–566 (DKPIVDYVIA…GGLSVQYLER (137 aa)). Cu cation contacts are provided by histidine 476, histidine 479, histidine 481, histidine 548, cysteine 549, histidine 550, and histidine 554. Residues 606–621 (KVKKWVGEHPDWYIKN) constitute a propeptide that is removed on maturation.

It belongs to the multicopper oxidase family. Monomer. Requires Cu cation as cofactor. Post-translationally, proteolytically processed at both its N-terminus and its C-terminus.

It localises to the secreted. The enzyme catalyses 4 hydroquinone + O2 = 4 benzosemiquinone + 2 H2O. Probably involved in lignin degradation and in the detoxification of lignin-derived products in its natural habitat (herbivorous dung), which is rich in lignin of grasses and straw. Probably involved in melanin synthesis and in perithecia development. This Podospora anserina (Pleurage anserina) protein is Laccase-2 (LAC2).